A 241-amino-acid polypeptide reads, in one-letter code: Leucyl/phenylalanyl-tRNA--protein transferase (241 aa).

It belongs to the L/F-transferase family.

The protein localises to the cytoplasm. It catalyses the reaction N-terminal L-lysyl-[protein] + L-leucyl-tRNA(Leu) = N-terminal L-leucyl-L-lysyl-[protein] + tRNA(Leu) + H(+). The catalysed reaction is N-terminal L-arginyl-[protein] + L-leucyl-tRNA(Leu) = N-terminal L-leucyl-L-arginyl-[protein] + tRNA(Leu) + H(+). The enzyme catalyses L-phenylalanyl-tRNA(Phe) + an N-terminal L-alpha-aminoacyl-[protein] = an N-terminal L-phenylalanyl-L-alpha-aminoacyl-[protein] + tRNA(Phe). Its function is as follows. Functions in the N-end rule pathway of protein degradation where it conjugates Leu, Phe and, less efficiently, Met from aminoacyl-tRNAs to the N-termini of proteins containing an N-terminal arginine or lysine. The polypeptide is Leucyl/phenylalanyl-tRNA--protein transferase (Neisseria meningitidis serogroup C (strain 053442)).